The primary structure comprises 220 residues: Flavin-dependent thymidylate synthase (220 aa).

Residues 1–208 (MKIDILDKGF…PWTFEAFLKY (208 aa)) form the ThyX domain. Residues Thr-55, 78-80 (RHR), and Glu-86 each bind FAD. DUMP-binding positions include 75-78 (QWFR), 86-90 (ELSGR), and Arg-147. The ThyX motif motif lies at 78 to 88 (RHRIASYNELS). Residues 163 to 165 (NAR) and Asn-169 contribute to the FAD site. Position 174 (Arg-174) interacts with dUMP. Residue Arg-174 is the Involved in ionization of N3 of dUMP, leading to its activation of the active site.

It belongs to the thymidylate synthase ThyX family. Homotetramer. FAD serves as cofactor.

The enzyme catalyses dUMP + (6R)-5,10-methylene-5,6,7,8-tetrahydrofolate + NADPH + H(+) = dTMP + (6S)-5,6,7,8-tetrahydrofolate + NADP(+). It functions in the pathway pyrimidine metabolism; dTTP biosynthesis. In terms of biological role, catalyzes the reductive methylation of 2'-deoxyuridine-5'-monophosphate (dUMP) to 2'-deoxythymidine-5'-monophosphate (dTMP) while utilizing 5,10-methylenetetrahydrofolate (mTHF) as the methyl donor, and NADPH and FADH(2) as the reductant. This Thermotoga petrophila (strain ATCC BAA-488 / DSM 13995 / JCM 10881 / RKU-1) protein is Flavin-dependent thymidylate synthase.